Consider the following 327-residue polypeptide: Gamma-resorcylate decarboxylase (327 aa).

Positions 8, 10, 164, and 287 each coordinate Zn(2+). Asp287 is an active-site residue.

Belongs to the metallo-dependent hydrolases superfamily. ACMSD family. Homotetramer. Zn(2+) is required as a cofactor.

The catalysed reaction is 2,6-dihydroxybenzoate + H(+) = resorcinol + CO2. It catalyses the reaction 2,3-dihydroxybenzoate + H(+) = catechol + CO2. Its pathway is aromatic compound metabolism. Insensitive to oxygen. Decarboxylation and carboxylation are inhibited by AgNO(3) and by diethyl pyrocarbonate, a histidine residue-specific inhibitor. Decarboxylation is also inhibited by HgCl(2) and activated by MgCl(2). In terms of biological role, involved in the gamma-resorcylate (2,6-dihydroxybenzoate) catabolism. Catalyzes the reversible decarboxylation of gamma-resorcylate to resorcinol. Also catalyzes the decarboxylation of 2,3-dihydroxybenzoate to catechol, but does not act on 2-hydroxybenzoic acid 3-hydroxybenzoic acid, 4-hydroxybenzoic acid, 3,4-dihydroxybenzoic acid, 2,5-dihydroxybenzoic acid, 2,3,4-trihydroxybenzoic acid, 3,4,5-trihydroxybenzoic acid, 4-aminobenzoic acid, o-hydroxyphenylacetic acid and vanillic acid. Resorcinol and catechol can both be carboxylated by the reverse reaction. This Rhizobium radiobacter (Agrobacterium tumefaciens) protein is Gamma-resorcylate decarboxylase.